The sequence spans 301 residues: Homoserine O-acetyltransferase (301 aa).

The active-site Acyl-thioester intermediate is Cys-142. Positions 163 and 192 each coordinate substrate. His-235 functions as the Proton acceptor in the catalytic mechanism. Residue Glu-237 is part of the active site. Position 249 (Arg-249) interacts with substrate.

The protein belongs to the MetA family.

It is found in the cytoplasm. It catalyses the reaction L-homoserine + acetyl-CoA = O-acetyl-L-homoserine + CoA. Its pathway is amino-acid biosynthesis; L-methionine biosynthesis via de novo pathway; O-acetyl-L-homoserine from L-homoserine: step 1/1. Transfers an acetyl group from acetyl-CoA to L-homoserine, forming acetyl-L-homoserine. In Bacillus cereus (strain ZK / E33L), this protein is Homoserine O-acetyltransferase.